The primary structure comprises 356 residues: Replication factor C subunit 3 (356 aa).

An N6-acetyllysine modification is found at Lys20. Ser125 is modified (phosphoserine).

It belongs to the activator 1 small subunits family. As to quaternary structure, subunit of the RFC complex, an heteropentameric complex consisting of a large subunit RFC1 and four small subunits RFC2, RFC3, RFC4 and RFC5; the RFC complex interacts with PCNA. Forms an heterotetrameric complex with RFC2, RFC4 and RFC5; this complex has ATPase activity but is not stimulated by PCNA. The heterotetramer of subunits RFC2, RFC3, RFC4 and RFC5 interacts with RAD17. Interacts with CNTD1; this interaction facilitates crossover formation.

It is found in the nucleus. In terms of biological role, subunit of the replication factor C (RFC) complex which acts during elongation of primed DNA templates by DNA polymerases delta and epsilon, and is necessary for ATP-dependent loading of proliferating cell nuclear antigen (PCNA) onto primed DNA. This chain is Replication factor C subunit 3 (RFC3), found in Bos taurus (Bovine).